The chain runs to 597 residues: Kelch-like protein 21 (597 aa).

The BTB domain maps to 35–103 (LDVTLEAAGG…SYTGRVAVSG (69 aa)). Positions 138 to 239 (CLDMQDFAEA…RRFYLLAHVE (102 aa)) constitute a BACK domain. Kelch repeat units follow at residues 287–335 (ILVL…ALGN), 336–382 (DIYV…VLDG), 384–422 (LYVV…ACRG), 423–470 (RLYA…TLNG), 472–512 (MYFV…VLGG), and 513–560 (KLYV…SIFR). Positions 570–597 (GRGFELNSGSNDVDAGYHRLPQNPEELH) are disordered.

As to quaternary structure, component of the BCR(KLHL21) E3 ubiquitin ligase complex, at least composed of CUL3, KLHL21 and RBX1.

The protein localises to the cytoplasm. Its subcellular location is the cytoskeleton. The protein resides in the spindle. It participates in protein modification; protein ubiquitination. Its function is as follows. Substrate-specific adapter of a BCR (BTB-CUL3-RBX1) E3 ubiquitin-protein ligase complex required for efficient chromosome alignment and cytokinesis. The BCR(KLHL21) E3 ubiquitin ligase complex regulates localization of the chromosomal passenger complex (CPC) from chromosomes to the spindle midzone in anaphase and mediates the ubiquitination of AURKB. Ubiquitination of AURKB by BCR(KLHL21) E3 ubiquitin ligase complex may not lead to its degradation by the proteasome. This is Kelch-like protein 21 (Klhl21) from Mus musculus (Mouse).